The chain runs to 70 residues: MKVYCLLLVLLVGLVSQAHGKPTKRCLSVCSAEYEPVCGSDGKTYANKCHLMTEACWSPTSITLVHEGKC.

Residues 1–20 form the signal peptide; sequence MKVYCLLLVLLVGLVSQAHG. Residues 21–70 enclose the Kazal-like domain; it reads KPTKRCLSVCSAEYEPVCGSDGKTYANKCHLMTEACWSPTSITLVHEGKC. Cystine bridges form between C26–C56, C30–C49, and C38–C70.

This sequence belongs to the conopeptide P-like superfamily. In terms of tissue distribution, expressed by the venom duct.

It is found in the secreted. Acts as a neurotoxin by inhibiting an ion channel. May also act as a serine protease inhibitor, since it possess the kazal serine protease inhibitor signature. The polypeptide is Turripeptide Lol9.1 (Iotyrris olangoensis (Sea snail)).